The sequence spans 373 residues: Queuine tRNA-ribosyltransferase (373 aa).

The active-site Proton acceptor is the Asp94. Substrate contacts are provided by residues 94-98 (DSGGF), Asp148, Gln190, and Gly217. The segment at 248–254 (GVGSPDC) is RNA binding. Catalysis depends on Asp267, which acts as the Nucleophile. The tract at residues 272-276 (TRIAR) is RNA binding; important for wobble base 34 recognition. The Zn(2+) site is built by Cys305, Cys307, Cys310, and His336.

Belongs to the queuine tRNA-ribosyltransferase family. Homodimer. Within each dimer, one monomer is responsible for RNA recognition and catalysis, while the other monomer binds to the replacement base PreQ1. Zn(2+) serves as cofactor.

It catalyses the reaction 7-aminomethyl-7-carbaguanine + guanosine(34) in tRNA = 7-aminomethyl-7-carbaguanosine(34) in tRNA + guanine. It functions in the pathway tRNA modification; tRNA-queuosine biosynthesis. In terms of biological role, catalyzes the base-exchange of a guanine (G) residue with the queuine precursor 7-aminomethyl-7-deazaguanine (PreQ1) at position 34 (anticodon wobble position) in tRNAs with GU(N) anticodons (tRNA-Asp, -Asn, -His and -Tyr). Catalysis occurs through a double-displacement mechanism. The nucleophile active site attacks the C1' of nucleotide 34 to detach the guanine base from the RNA, forming a covalent enzyme-RNA intermediate. The proton acceptor active site deprotonates the incoming PreQ1, allowing a nucleophilic attack on the C1' of the ribose to form the product. After dissociation, two additional enzymatic reactions on the tRNA convert PreQ1 to queuine (Q), resulting in the hypermodified nucleoside queuosine (7-(((4,5-cis-dihydroxy-2-cyclopenten-1-yl)amino)methyl)-7-deazaguanosine). This Moorella thermoacetica (strain ATCC 39073 / JCM 9320) protein is Queuine tRNA-ribosyltransferase.